We begin with the raw amino-acid sequence, 303 residues long: Bifunctional protein FolD (303 aa).

Residues 165-167, Ser190, and Ile231 contribute to the NADP(+) site; that span reads GRS.

It belongs to the tetrahydrofolate dehydrogenase/cyclohydrolase family. In terms of assembly, homodimer.

The enzyme catalyses (6R)-5,10-methylene-5,6,7,8-tetrahydrofolate + NADP(+) = (6R)-5,10-methenyltetrahydrofolate + NADPH. It catalyses the reaction (6R)-5,10-methenyltetrahydrofolate + H2O = (6R)-10-formyltetrahydrofolate + H(+). Its pathway is one-carbon metabolism; tetrahydrofolate interconversion. Catalyzes the oxidation of 5,10-methylenetetrahydrofolate to 5,10-methenyltetrahydrofolate and then the hydrolysis of 5,10-methenyltetrahydrofolate to 10-formyltetrahydrofolate. This Prochlorococcus marinus (strain NATL2A) protein is Bifunctional protein FolD.